Consider the following 450-residue polypeptide: MGAPPGYRPSAWVHLLHQLPRADFQLRPVPSGFAPRDQEYQQALLLVAALAGLGLGLSLIFIAVYLIRFCCCRPPEPHGAKSPPPGGGCVTWSCIAALLVGCAGIGIGFYGNSETSDGVSQLSSALLHANHTLSTIDDVVLETVERLGEAVKTELTTLEEVLSVRMELVAATRGARRQAEAAAQYLQGLAFWQGVSLSPVQVAEDVTFVEEYRWLAYVLLLLLVLLVCLFTLLGLAKQSKWLVVVMTAMSLLVLVLSWGSMGLEAATAVGLSDFCSNPDTYVLNLTQEETGLSSDILSYYFLCNQAVSNPFQQRLTLSQRALASIHSQLQGLEREAIPQFSAAQKPLLSLEETLNVTERSFHQLVALLHCRSLHKDYGSALRGLCEDALEGLLFLMLFSLLSAGALATTLCSLPRAWALFPPSDDYDDTDDDDPFNPQESKRFVQWQSSI.

Over 1–43 the chain is Extracellular; that stretch reads MGAPPGYRPSAWVHLLHQLPRADFQLRPVPSGFAPRDQEYQQA. Residues 44–64 form a helical membrane-spanning segment; sequence LLLVAALAGLGLGLSLIFIAV. The Cytoplasmic portion of the chain corresponds to 65–88; the sequence is YLIRFCCCRPPEPHGAKSPPPGGG. The chain crosses the membrane as a helical span at residues 89 to 109; the sequence is CVTWSCIAALLVGCAGIGIGF. The Extracellular segment spans residues 110–214; the sequence is YGNSETSDGV…DVTFVEEYRW (105 aa). N-linked (GlcNAc...) asparagine glycosylation occurs at Asn130. The helical transmembrane segment at 215 to 235 threads the bilayer; sequence LAYVLLLLLVLLVCLFTLLGL. Residues 236–240 are Cytoplasmic-facing; the sequence is AKQSK. Residues 241–261 traverse the membrane as a helical segment; the sequence is WLVVVMTAMSLLVLVLSWGSM. At 262 to 390 the chain is on the extracellular side; that stretch reads GLEAATAVGL…LRGLCEDALE (129 aa). 2 disulfide bridges follow: Cys275-Cys385 and Cys303-Cys370. N-linked (GlcNAc...) asparagine glycans are attached at residues Asn284 and Asn355. The chain crosses the membrane as a helical span at residues 391 to 411; it reads GLLFLMLFSLLSAGALATTLC. The Cytoplasmic segment spans residues 412–450; sequence SLPRAWALFPPSDDYDDTDDDDPFNPQESKRFVQWQSSI. Residues 428–450 are disordered; the sequence is DTDDDDPFNPQESKRFVQWQSSI. A Phosphoserine modification is found at Ser440.

Belongs to the tweety family. Homotetramer; disulfide-linked. Homodimer. In terms of processing, N-glycosylated. Contains high-mannose, hybrid and complex oligosaccharides. In terms of tissue distribution, expressed in the astrocytes (at protein level). Restricted mainly to neural tissues. Strongly expressed in brain and eye.

The protein resides in the cell membrane. The enzyme catalyses chloride(in) = chloride(out). The catalysed reaction is L-glutamate(out) = L-glutamate(in). Its activity is regulated as follows. Inhibited by (4-[(2-butyl-6,7-dichloro-2- cyclopentyl-2,3-dihydro-1-oxo-1H-inden-5-yl)oxy]butanoic acid). Functionally, calcium-independent, swelling-dependent volume-regulated anion channel (VRAC-swell) which plays a pivotal role in the process of regulatory volume decrease (RVD) in the brain through the efflux of anions like chloride and organic osmolytes like glutamate. In Mus musculus (Mouse), this protein is Protein tweety homolog 1 (Ttyh1).